The chain runs to 462 residues: MPADPEVHFEGTIVAIRGGVVDVAFAEAVPRIHALIVAGGVAMEVASIVGEGVVRCIALGPTRGLGLGTRATGTRAGIEVPVGEGVLGRMLDMFGAPLDGAPPPEATARRPIHRPPPVLSDRVLRAEVLETGIKAIDLLSPIERGGKTGLFGGAGVGKTVLLSELIHNTVEHHHGVSLFCGIGERSREAEELWREMGEAGVRERMVMLFGQMNEAPGVRFLVGHSALTMAEYFRDDREQDVLLLIDNIFRFVQAGSEVSGLLGRMPSRVGYQPTLATELAALQERIASTRRGAITSIQAVYVPADDFTDPAAAHIFSHLSASVVLSRKRASEGLYPAVDPLASTSVMLTPEVVGQRHYDIARGVRRTLAEYEDLRDIIAMLGIEELSAHDRAVVARARRLERFLTQPFFTVGAAAGTLGKLVPIAETLDGCEEILSQTSFERPESAYYMIGALSDLRKEAAA.

152–159 (GGAGVGKT) is a binding site for ATP.

The protein belongs to the ATPase alpha/beta chains family. As to quaternary structure, F-type ATPases have 2 components, CF(1) - the catalytic core - and CF(0) - the membrane proton channel. CF(1) has five subunits: alpha(3), beta(3), gamma(1), delta(1), epsilon(1). CF(0) has four main subunits: a(1), b(1), b'(1) and c(9-12).

Its subcellular location is the cell inner membrane. It carries out the reaction ATP + H2O + 4 H(+)(in) = ADP + phosphate + 5 H(+)(out). In terms of biological role, produces ATP from ADP in the presence of a proton gradient across the membrane. The catalytic sites are hosted primarily by the beta subunits. This is ATP synthase subunit beta 1 from Dinoroseobacter shibae (strain DSM 16493 / NCIMB 14021 / DFL 12).